The following is a 353-amino-acid chain: Holliday junction branch migration complex subunit RuvB (353 aa).

Residues 4 to 186 (ADRLIAATHS…FGIVQRLEFY (183 aa)) form a large ATPase domain (RuvB-L) region. ATP is bound by residues Ile25, Arg26, Gly67, Lys70, Thr71, Thr72, 133 to 135 (EDF), Arg176, Tyr186, and Arg223. Thr71 serves as a coordination point for Mg(2+). The small ATPAse domain (RuvB-S) stretch occupies residues 187-257 (STADLATIVS…VADLALNLLD (71 aa)). A head domain (RuvB-H) region spans residues 260-353 (EHGFDHQDRR…VDEFLDAVDD (94 aa)). 3 residues coordinate DNA: Arg296, Arg315, and Arg320.

Belongs to the RuvB family. In terms of assembly, homohexamer. Forms an RuvA(8)-RuvB(12)-Holliday junction (HJ) complex. HJ DNA is sandwiched between 2 RuvA tetramers; dsDNA enters through RuvA and exits via RuvB. An RuvB hexamer assembles on each DNA strand where it exits the tetramer. Each RuvB hexamer is contacted by two RuvA subunits (via domain III) on 2 adjacent RuvB subunits; this complex drives branch migration. In the full resolvosome a probable DNA-RuvA(4)-RuvB(12)-RuvC(2) complex forms which resolves the HJ.

It localises to the cytoplasm. The enzyme catalyses ATP + H2O = ADP + phosphate + H(+). Its function is as follows. The RuvA-RuvB-RuvC complex processes Holliday junction (HJ) DNA during genetic recombination and DNA repair, while the RuvA-RuvB complex plays an important role in the rescue of blocked DNA replication forks via replication fork reversal (RFR). RuvA specifically binds to HJ cruciform DNA, conferring on it an open structure. The RuvB hexamer acts as an ATP-dependent pump, pulling dsDNA into and through the RuvAB complex. RuvB forms 2 homohexamers on either side of HJ DNA bound by 1 or 2 RuvA tetramers; 4 subunits per hexamer contact DNA at a time. Coordinated motions by a converter formed by DNA-disengaged RuvB subunits stimulates ATP hydrolysis and nucleotide exchange. Immobilization of the converter enables RuvB to convert the ATP-contained energy into a lever motion, pulling 2 nucleotides of DNA out of the RuvA tetramer per ATP hydrolyzed, thus driving DNA branch migration. The RuvB motors rotate together with the DNA substrate, which together with the progressing nucleotide cycle form the mechanistic basis for DNA recombination by continuous HJ branch migration. Branch migration allows RuvC to scan DNA until it finds its consensus sequence, where it cleaves and resolves cruciform DNA. This chain is Holliday junction branch migration complex subunit RuvB, found in Pseudomonas fluorescens (strain Pf0-1).